We begin with the raw amino-acid sequence, 1332 residues long: DNA-directed RNA polymerase subunit beta'' (1332 aa).

Zn(2+)-binding residues include C220, C291, C298, and C301.

The protein belongs to the RNA polymerase beta' chain family. RpoC2 subfamily. In terms of assembly, in plastids the minimal PEP RNA polymerase catalytic core is composed of four subunits: alpha, beta, beta', and beta''. When a (nuclear-encoded) sigma factor is associated with the core the holoenzyme is formed, which can initiate transcription. Zn(2+) serves as cofactor.

The protein resides in the plastid. It is found in the chloroplast. The enzyme catalyses RNA(n) + a ribonucleoside 5'-triphosphate = RNA(n+1) + diphosphate. Its function is as follows. DNA-dependent RNA polymerase catalyzes the transcription of DNA into RNA using the four ribonucleoside triphosphates as substrates. In Lotus japonicus (Lotus corniculatus var. japonicus), this protein is DNA-directed RNA polymerase subunit beta''.